We begin with the raw amino-acid sequence, 428 residues long: RF4 protein (428 aa).

Residues N8, N205, and N344 are each glycosylated (N-linked (GlcNAc...) asparagine).

Not known. The polypeptide is RF4 protein (RF4) (Kluyveromyces lactis (strain ATCC 8585 / CBS 2359 / DSM 70799 / NBRC 1267 / NRRL Y-1140 / WM37) (Yeast)).